The following is a 147-amino-acid chain: Large ribosomal subunit protein uL15 (147 aa).

Residues 1–28 are compositionally biased toward basic residues; it reads MIRRRKKVRKLRGSHTHGWGCKKKHRGG. Residues 1-43 form a disordered region; the sequence is MIRRRKKVRKLRGSHTHGWGCKKKHRGGGSKGGRGMAGTGKRN. Residues 29-38 are compositionally biased toward gly residues; the sequence is GSKGGRGMAG.

The protein belongs to the universal ribosomal protein uL15 family. As to quaternary structure, part of the 50S ribosomal subunit.

Binds to the 23S rRNA. This Pyrococcus furiosus (strain ATCC 43587 / DSM 3638 / JCM 8422 / Vc1) protein is Large ribosomal subunit protein uL15.